The chain runs to 122 residues: Urease subunit beta (122 aa).

A disordered region spans residues 102–122; sequence DGGTAVAGEPRPGIAAERDHQ.

It belongs to the urease beta subunit family. Heterotrimer of UreA (gamma), UreB (beta) and UreC (alpha) subunits. Three heterotrimers associate to form the active enzyme.

The protein resides in the cytoplasm. The enzyme catalyses urea + 2 H2O + H(+) = hydrogencarbonate + 2 NH4(+). The protein operates within nitrogen metabolism; urea degradation; CO(2) and NH(3) from urea (urease route): step 1/1. The protein is Urease subunit beta of Paenarthrobacter aurescens (strain TC1).